A 548-amino-acid chain; its full sequence is GLC7-interacting protein 2 (548 aa).

Residues 1–23 (MYIKAEQKPQQFERKNEKLDRNK) show a composition bias toward basic and acidic residues. Disordered regions lie at residues 1–54 (MYIK…STEE) and 118–143 (VESL…STVP). Ser51 carries the phosphoserine modification. The residue at position 52 (Thr52) is a Phosphothreonine. Residue Ser155 is modified to Phosphoserine. Positions 191–212 (RSKSLPTTPGIRSGNGVQARDG) are disordered. Ser221 and Ser238 each carry phosphoserine. The interval 293–346 (FAHPAKISNPNNGKGTNNTKLRKSKRFQNLLKNRTDMPPSKSNKKFVNGGGAHE) is disordered. In terms of domain architecture, CBM21 spans 419–534 (HNGNDCNGVA…NNNGNNYKVD (116 aa)).

As to quaternary structure, interacts with phosphatase 1 (GLC7).

This is GLC7-interacting protein 2 (GIP2) from Saccharomyces cerevisiae (strain ATCC 204508 / S288c) (Baker's yeast).